A 242-amino-acid polypeptide reads, in one-letter code: Ribonuclease 3 (242 aa).

The 129-residue stretch at 18-146 folds into the RNase III domain; it reads APAIEAKLGY…IIGAIYLDGG (129 aa). Glu-59 provides a ligand contact to Mg(2+). Asp-63 is an active-site residue. Asp-132 and Glu-135 together coordinate Mg(2+). Glu-135 is a catalytic residue. Positions 172–241 constitute a DRBM domain; it reads NWKALLQDYC…AADALSRVEL (70 aa). The segment covering 218-227 has biased composition (basic and acidic residues); the sequence is RGKGTSKKEA. Residues 218-242 form a disordered region; it reads RGKGTSKKEAQQAAAADALSRVELP.

This sequence belongs to the ribonuclease III family. As to quaternary structure, homodimer. Requires Mg(2+) as cofactor.

The protein resides in the cytoplasm. The catalysed reaction is Endonucleolytic cleavage to 5'-phosphomonoester.. In terms of biological role, digests double-stranded RNA. Involved in the processing of primary rRNA transcript to yield the immediate precursors to the large and small rRNAs (23S and 16S). Processes some mRNAs, and tRNAs when they are encoded in the rRNA operon. Processes pre-crRNA and tracrRNA of type II CRISPR loci if present in the organism. This is Ribonuclease 3 from Protochlamydia amoebophila (strain UWE25).